Consider the following 364-residue polypeptide: Aspartate aminotransferase (364 aa).

3 residues coordinate L-aspartate: glycine 23, tryptophan 99, and asparagine 143. Position 200 is an N6-(pyridoxal phosphate)lysine (lysine 200). Arginine 320 serves as a coordination point for L-aspartate.

This sequence belongs to the class-I pyridoxal-phosphate-dependent aminotransferase family. As to quaternary structure, homodimer. Pyridoxal 5'-phosphate is required as a cofactor.

It localises to the cytoplasm. It carries out the reaction L-aspartate + 2-oxoglutarate = oxaloacetate + L-glutamate. This chain is Aspartate aminotransferase (aspC), found in Thermococcus kodakarensis (strain ATCC BAA-918 / JCM 12380 / KOD1) (Pyrococcus kodakaraensis (strain KOD1)).